A 91-amino-acid chain; its full sequence is Small ribosomal subunit protein uS19 (91 aa).

This sequence belongs to the universal ribosomal protein uS19 family.

Its function is as follows. Protein S19 forms a complex with S13 that binds strongly to the 16S ribosomal RNA. In Erythrobacter litoralis (strain HTCC2594), this protein is Small ribosomal subunit protein uS19.